A 506-amino-acid polypeptide reads, in one-letter code: uncharacterized protein (506 aa).

This sequence belongs to the Mg-chelatase subunits D/I family. ComM subfamily.

This is an uncharacterized protein from Escherichia coli (strain K12).